A 291-amino-acid polypeptide reads, in one-letter code: Glycine--tRNA ligase alpha subunit (291 aa).

It belongs to the class-II aminoacyl-tRNA synthetase family. In terms of assembly, tetramer of two alpha and two beta subunits.

The protein resides in the cytoplasm. The catalysed reaction is tRNA(Gly) + glycine + ATP = glycyl-tRNA(Gly) + AMP + diphosphate. This is Glycine--tRNA ligase alpha subunit from Geobacter metallireducens (strain ATCC 53774 / DSM 7210 / GS-15).